The chain runs to 68 residues: Putative protein YfaH (68 aa).

The sequence is that of Putative protein YfaH (yfaH) from Escherichia coli (strain K12).